A 377-amino-acid chain; its full sequence is NADH dehydrogenase [ubiquinone] 1 alpha subcomplex subunit 9, mitochondrial (377 aa).

The N-terminal 35 residues, 1–35, are a transit peptide targeting the mitochondrion; the sequence is MAAAAQSRVVRVLSMSRSAITAIATSVCHGPPCRQ. An N6-succinyllysine modification is found at lysine 175. Residues lysine 189 and lysine 370 each carry the N6-acetyllysine modification.

The protein belongs to the complex I NDUFA9 subunit family. Complex I is composed of 45 different subunits. This a component of the hydrophobic protein fraction. Interacts with BLOC1S1. Interacts with SLC2A4. Interacts with CLOCK. Interacts with RAB5IF. FAD is required as a cofactor. Post-translationally, acetylated on lysine residues. BLOC1S1 is required for acetylation. Acetylated by CLOCK in a circadian manner.

It localises to the mitochondrion matrix. Its function is as follows. Accessory subunit of the mitochondrial membrane respiratory chain NADH dehydrogenase (Complex I), that is believed not to be involved in catalysis. Required for proper complex I assembly. Complex I functions in the transfer of electrons from NADH to the respiratory chain. The immediate electron acceptor for the enzyme is believed to be ubiquinone. The sequence is that of NADH dehydrogenase [ubiquinone] 1 alpha subcomplex subunit 9, mitochondrial (NDUFA9) from Homo sapiens (Human).